Consider the following 494-residue polypeptide: Acetyl-coenzyme A carboxylase carboxyl transferase subunit beta, chloroplastic (494 aa).

Residues 230–494 (LWVQCENCYG…LHGFFPLNQN (265 aa)) form the CoA carboxyltransferase N-terminal domain. 4 residues coordinate Zn(2+): Cys-234, Cys-237, Cys-253, and Cys-256. A C4-type zinc finger spans residues 234-256 (CENCYGLNYKKFFRSKMNICEQC).

Belongs to the AccD/PCCB family. Acetyl-CoA carboxylase is a heterohexamer composed of biotin carboxyl carrier protein, biotin carboxylase and 2 subunits each of ACCase subunit alpha and ACCase plastid-coded subunit beta (accD). Zn(2+) serves as cofactor.

It localises to the plastid. The protein resides in the chloroplast stroma. It carries out the reaction N(6)-carboxybiotinyl-L-lysyl-[protein] + acetyl-CoA = N(6)-biotinyl-L-lysyl-[protein] + malonyl-CoA. It functions in the pathway lipid metabolism; malonyl-CoA biosynthesis; malonyl-CoA from acetyl-CoA: step 1/1. Functionally, component of the acetyl coenzyme A carboxylase (ACC) complex. Biotin carboxylase (BC) catalyzes the carboxylation of biotin on its carrier protein (BCCP) and then the CO(2) group is transferred by the transcarboxylase to acetyl-CoA to form malonyl-CoA. The protein is Acetyl-coenzyme A carboxylase carboxyl transferase subunit beta, chloroplastic of Drimys granadensis.